Reading from the N-terminus, the 183-residue chain is uncharacterized protein (183 aa).

Residues 1-23 (MGSSFVIDRSSSSPAPPRGPAPK) form a disordered region.

This is an uncharacterized protein from Saccharomyces cerevisiae (strain ATCC 204508 / S288c) (Baker's yeast).